A 341-amino-acid polypeptide reads, in one-letter code: Spore photoproduct lyase (341 aa).

The Radical SAM core domain maps to 76–304; it reads SKPSAEYAIP…ESKRKYKWGR (229 aa). Residues Cys-90, Cys-94, and Cys-97 each coordinate [4Fe-4S] cluster. Positions 217-234 form a DNA-binding region, H-T-H motif; it reads QAARKVAGAGYKLGFVVA.

This sequence belongs to the radical SAM superfamily. SPL family. In terms of assembly, monomer or homodimer. [4Fe-4S] cluster serves as cofactor. Requires S-adenosyl-L-methionine as cofactor.

The catalysed reaction is (5R)-5,6-dihydro-5-(thymidin-7-yl)thymidine in DNA = a thymidine dimer in DNA. In terms of biological role, involved in repair of UV radiation-induced DNA damage during spore germination. Can repair thymine dimer 5-thyminyl-5,6-dihydrothymine (known as spore photoproduct (SP)) by in situ monomerization of SP to two thymines. This chain is Spore photoproduct lyase (splG), found in Geobacillus sp. (strain Y412MC61).